The sequence spans 406 residues: Arginine biosynthesis bifunctional protein ArgJ (406 aa).

T152, K179, T190, E277, N401, and S406 together coordinate substrate. T190 functions as the Nucleophile in the catalytic mechanism.

Belongs to the ArgJ family. As to quaternary structure, heterotetramer of two alpha and two beta chains.

The protein resides in the cytoplasm. It carries out the reaction N(2)-acetyl-L-ornithine + L-glutamate = N-acetyl-L-glutamate + L-ornithine. The enzyme catalyses L-glutamate + acetyl-CoA = N-acetyl-L-glutamate + CoA + H(+). The protein operates within amino-acid biosynthesis; L-arginine biosynthesis; L-ornithine and N-acetyl-L-glutamate from L-glutamate and N(2)-acetyl-L-ornithine (cyclic): step 1/1. It functions in the pathway amino-acid biosynthesis; L-arginine biosynthesis; N(2)-acetyl-L-ornithine from L-glutamate: step 1/4. Its function is as follows. Catalyzes two activities which are involved in the cyclic version of arginine biosynthesis: the synthesis of N-acetylglutamate from glutamate and acetyl-CoA as the acetyl donor, and of ornithine by transacetylation between N(2)-acetylornithine and glutamate. This is Arginine biosynthesis bifunctional protein ArgJ from Neisseria meningitidis serogroup A / serotype 4A (strain DSM 15465 / Z2491).